Reading from the N-terminus, the 476-residue chain is Ribulose bisphosphate carboxylase large chain (476 aa).

Residues asparagine 124 and threonine 174 each coordinate substrate. Lysine 176 serves as the catalytic Proton acceptor. Lysine 178 lines the substrate pocket. Lysine 202, aspartate 204, and glutamate 205 together coordinate Mg(2+). Lysine 202 carries the post-translational modification N6-carboxylysine. Histidine 295 acts as the Proton acceptor in catalysis. Substrate contacts are provided by arginine 296, histidine 328, and serine 380.

The protein belongs to the RuBisCO large chain family. Type I subfamily. Heterohexadecamer of 8 large chains and 8 small chains; disulfide-linked. The disulfide link is formed within the large subunit homodimers. Mg(2+) is required as a cofactor. In terms of processing, the disulfide bond which can form in the large chain dimeric partners within the hexadecamer appears to be associated with oxidative stress and protein turnover.

Its subcellular location is the carboxysome. It catalyses the reaction 2 (2R)-3-phosphoglycerate + 2 H(+) = D-ribulose 1,5-bisphosphate + CO2 + H2O. The catalysed reaction is D-ribulose 1,5-bisphosphate + O2 = 2-phosphoglycolate + (2R)-3-phosphoglycerate + 2 H(+). Functionally, ruBisCO catalyzes two reactions: the carboxylation of D-ribulose 1,5-bisphosphate, the primary event in carbon dioxide fixation, as well as the oxidative fragmentation of the pentose substrate in the photorespiration process. Both reactions occur simultaneously and in competition at the same active site. In Trichormus variabilis (strain ATCC 29413 / PCC 7937) (Anabaena variabilis), this protein is Ribulose bisphosphate carboxylase large chain.